The following is a 69-amino-acid chain: DNA gyrase inhibitor YacG (69 aa).

Zn(2+)-binding residues include C7, C10, C26, and C30.

The protein belongs to the DNA gyrase inhibitor YacG family. Interacts with GyrB. Zn(2+) is required as a cofactor.

Its function is as follows. Inhibits all the catalytic activities of DNA gyrase by preventing its interaction with DNA. Acts by binding directly to the C-terminal domain of GyrB, which probably disrupts DNA binding by the gyrase. This is DNA gyrase inhibitor YacG from Shewanella baltica (strain OS155 / ATCC BAA-1091).